A 275-amino-acid polypeptide reads, in one-letter code: Adenosylcobinamide-GDP ribazoletransferase (275 aa).

Helical transmembrane passes span 53–73 (WFVF…TISL), 113–133 (VGSF…LGVS), 144–164 (LPFT…LYFV), 204–224 (FACI…PYFL), 225–245 (LSLL…KRWI), and 253–273 (LGAV…FVWI).

Belongs to the CobS family. Requires Mg(2+) as cofactor.

The protein localises to the cell inner membrane. It catalyses the reaction alpha-ribazole + adenosylcob(III)inamide-GDP = adenosylcob(III)alamin + GMP + H(+). The catalysed reaction is alpha-ribazole 5'-phosphate + adenosylcob(III)inamide-GDP = adenosylcob(III)alamin 5'-phosphate + GMP + H(+). Its pathway is cofactor biosynthesis; adenosylcobalamin biosynthesis; adenosylcobalamin from cob(II)yrinate a,c-diamide: step 7/7. Joins adenosylcobinamide-GDP and alpha-ribazole to generate adenosylcobalamin (Ado-cobalamin). Also synthesizes adenosylcobalamin 5'-phosphate from adenosylcobinamide-GDP and alpha-ribazole 5'-phosphate. The sequence is that of Adenosylcobinamide-GDP ribazoletransferase from Leptospira biflexa serovar Patoc (strain Patoc 1 / Ames).